The primary structure comprises 165 residues: SsrA-binding protein (165 aa).

Residues 141-165 (KLHDKRQEEKRKQADREVKSALARY) form a disordered region. The span at 145 to 159 (KRQEEKRKQADREVK) shows a compositional bias: basic and acidic residues.

It belongs to the SmpB family.

It is found in the cytoplasm. Functionally, required for rescue of stalled ribosomes mediated by trans-translation. Binds to transfer-messenger RNA (tmRNA), required for stable association of tmRNA with ribosomes. tmRNA and SmpB together mimic tRNA shape, replacing the anticodon stem-loop with SmpB. tmRNA is encoded by the ssrA gene; the 2 termini fold to resemble tRNA(Ala) and it encodes a 'tag peptide', a short internal open reading frame. During trans-translation Ala-aminoacylated tmRNA acts like a tRNA, entering the A-site of stalled ribosomes, displacing the stalled mRNA. The ribosome then switches to translate the ORF on the tmRNA; the nascent peptide is terminated with the 'tag peptide' encoded by the tmRNA and targeted for degradation. The ribosome is freed to recommence translation, which seems to be the essential function of trans-translation. The sequence is that of SsrA-binding protein from Prochlorococcus marinus (strain MIT 9303).